The primary structure comprises 298 residues: Protoheme IX farnesyltransferase (298 aa).

Helical transmembrane passes span 16–36, 45–65, 93–113, 114–134, 141–161, 172–192, 223–243, 244–264, and 277–297; these read VVAL…PDMP, ALGF…NQLL, VFAG…VNVI, TAVL…VYLK, IVIG…AVTG, SLLV…LAIF, VLLA…VFYL, GGAI…LNPP, and IVYL…LPWV.

The protein belongs to the UbiA prenyltransferase family. Protoheme IX farnesyltransferase subfamily.

It localises to the cell inner membrane. It carries out the reaction heme b + (2E,6E)-farnesyl diphosphate + H2O = Fe(II)-heme o + diphosphate. It participates in porphyrin-containing compound metabolism; heme O biosynthesis; heme O from protoheme: step 1/1. In terms of biological role, converts heme B (protoheme IX) to heme O by substitution of the vinyl group on carbon 2 of heme B porphyrin ring with a hydroxyethyl farnesyl side group. The protein is Protoheme IX farnesyltransferase of Xanthomonas euvesicatoria pv. vesicatoria (strain 85-10) (Xanthomonas campestris pv. vesicatoria).